Reading from the N-terminus, the 218-residue chain is uncharacterized protein (218 aa).

Transmembrane regions (helical) follow at residues 8 to 28 (LAVF…ATAG) and 158 to 178 (ILFY…FLLI).

The protein resides in the cell membrane. This is an uncharacterized protein from Mycoplasma genitalium (strain ATCC 33530 / DSM 19775 / NCTC 10195 / G37) (Mycoplasmoides genitalium).